We begin with the raw amino-acid sequence, 538 residues long: MPIGNLGHNPNVRALIPPAPPLPSQTDGAGGARNQLINSNGPMGSRLLFTPIRNSVADAADSRASDIPGLPTNPLRFAASEVSLHGALEVLHDKGGLDTLNSAIGSSLFRVETRDDGSHVAIGQKNGLETTVVLSEQEFSSLQSLDPEGKNKFVFTGGRGGAGHAMVTVASDIAEARQRIIDKLEPKDTKETKEPGDPNSGEGKIIEIHTSTSTSSLRADPKLWLSLGTIAAGLIGMAATGIAQAVALTPEPDDPITTDPDAAANTAEAAAKDQLTKEAFQNPDNQKVNIDENGNAIPSGELKDDVVAQIAEQAKAAGEQARQEAIESNSQAQQKYDEQHAKREQEMSLSSGVGYGISGALILGGGIGAGVTAALHRKNQPAEQTITTRTVVDNQPTNNASAQGNTDTSGPEESPASRRNSNASLASNGSDTSSTGTVENPYADVGMPRNDSLARISEEPIYDEVAADPNYSVIQHFSGNSPVTGRLVGTPGQGIQSTYALLASSGGLRLGMGGLTGGGESAVSTANAAPTPGPARFV.

Disordered stretches follow at residues 1-37 (MPIG…NQLI) and 184-204 (LEPK…GEGK). Residues 1-222 (MPIGNLGHNP…STSSLRADPK (222 aa)) lie on the Cytoplasmic side of the membrane. Residues 184-196 (LEPKDTKETKEPG) show a composition bias toward basic and acidic residues. A helical transmembrane segment spans residues 223-243 (LWLSLGTIAAGLIGMAATGIA). Over 244 to 354 (QAVALTPEPD…QEMSLSSGVG (111 aa)) the chain is Extracellular. Disordered stretches follow at residues 279 to 299 (AFQN…AIPS) and 313 to 347 (QAKA…EQEM). Residues 335–346 (KYDEQHAKREQE) are compositionally biased toward basic and acidic residues. The helical transmembrane segment at 355-375 (YGISGALILGGGIGAGVTAAL) threads the bilayer. Topologically, residues 376–538 (HRKNQPAEQT…APTPGPARFV (163 aa)) are cytoplasmic. The tract at residues 380 to 449 (QPAEQTITTR…NPYADVGMPR (70 aa)) is disordered. Over residues 381–411 (PAEQTITTRTVVDNQPTNNASAQGNTDTSGP) the composition is skewed to polar residues. The segment covering 417–430 (SRRNSNASLASNGS) has biased composition (low complexity). Positions 440-442 (NPY) match the Essential for actin pedestal formation motif.

It belongs to the Tir receptor family. In terms of assembly, interacts with intimin and host proteins. Phosphorylated by host kinases.

The protein resides in the secreted. It localises to the host cell membrane. Its function is as follows. Multifunctional protein that is required for efficient pedestal formation in host epithelial cells during infection. The extracellular region acts as a receptor for bacterial intimin, allowing the bacterium to attach tightly to the host-cell surface. Simultaneously, the intracellular region initiates a signaling cascade in the host cell, which leads to actin polymerization and formation of actin pedestals at the sites of bacterial adhesion. This chain is Translocated intimin receptor Tir (tir), found in Escherichia coli.